The following is a 371-amino-acid chain: Putative glutamate--cysteine ligase 2 (371 aa).

Belongs to the glutamate--cysteine ligase type 2 family. YbdK subfamily. As to quaternary structure, homodimer.

The enzyme catalyses L-cysteine + L-glutamate + ATP = gamma-L-glutamyl-L-cysteine + ADP + phosphate + H(+). Its function is as follows. ATP-dependent carboxylate-amine ligase which exhibits weak glutamate--cysteine ligase activity. The sequence is that of Putative glutamate--cysteine ligase 2 from Cronobacter sakazakii (strain ATCC BAA-894) (Enterobacter sakazakii).